We begin with the raw amino-acid sequence, 159 residues long: Phosphopantetheine adenylyltransferase (159 aa).

Threonine 9 is a substrate binding site. ATP contacts are provided by residues threonine 9–phenylalanine 10 and histidine 17. Substrate is bound by residues lysine 41, leucine 73, and arginine 87. ATP-binding positions include glycine 88–arginine 90, glutamate 98, and tyrosine 123–threonine 129.

Belongs to the bacterial CoaD family. In terms of assembly, homohexamer. Mg(2+) serves as cofactor.

The protein resides in the cytoplasm. It catalyses the reaction (R)-4'-phosphopantetheine + ATP + H(+) = 3'-dephospho-CoA + diphosphate. The protein operates within cofactor biosynthesis; coenzyme A biosynthesis; CoA from (R)-pantothenate: step 4/5. In terms of biological role, reversibly transfers an adenylyl group from ATP to 4'-phosphopantetheine, yielding dephospho-CoA (dPCoA) and pyrophosphate. The polypeptide is Phosphopantetheine adenylyltransferase (Pseudomonas syringae pv. tomato (strain ATCC BAA-871 / DC3000)).